The sequence spans 68 residues: Putative membrane protein insertion efficiency factor (68 aa).

It belongs to the UPF0161 family.

Its subcellular location is the cell inner membrane. In terms of biological role, could be involved in insertion of integral membrane proteins into the membrane. This chain is Putative membrane protein insertion efficiency factor, found in Hydrogenobaculum sp. (strain Y04AAS1).